A 400-amino-acid chain; its full sequence is Argininosuccinate synthase (400 aa).

8–16 is a binding site for ATP; that stretch reads AYSGGLDTS. Tyrosine 87 provides a ligand contact to L-citrulline. ATP is bound at residue glycine 117. 3 residues coordinate L-aspartate: threonine 119, asparagine 123, and aspartate 124. Asparagine 123 serves as a coordination point for L-citrulline. 4 residues coordinate L-citrulline: arginine 127, serine 175, glutamate 260, and tyrosine 272.

This sequence belongs to the argininosuccinate synthase family. Type 1 subfamily. Homotetramer.

It is found in the cytoplasm. The catalysed reaction is L-citrulline + L-aspartate + ATP = 2-(N(omega)-L-arginino)succinate + AMP + diphosphate + H(+). It participates in amino-acid biosynthesis; L-arginine biosynthesis; L-arginine from L-ornithine and carbamoyl phosphate: step 2/3. The polypeptide is Argininosuccinate synthase (Mycolicibacterium gilvum (strain PYR-GCK) (Mycobacterium gilvum (strain PYR-GCK))).